The following is a 61-amino-acid chain: Photosystem II reaction center protein K (61 aa).

A propeptide spanning residues 1 to 24 (MINIFSFICIYLHSALYSSSFFFG) is cleaved from the precursor. Residues 40 to 60 (MPVIPLFFFLLAFVWQAAVSF) traverse the membrane as a helical segment.

Belongs to the PsbK family. PSII is composed of 1 copy each of membrane proteins PsbA, PsbB, PsbC, PsbD, PsbE, PsbF, PsbH, PsbI, PsbJ, PsbK, PsbL, PsbM, PsbT, PsbX, PsbY, PsbZ, Psb30/Ycf12, at least 3 peripheral proteins of the oxygen-evolving complex and a large number of cofactors. It forms dimeric complexes.

The protein resides in the plastid. Its subcellular location is the chloroplast thylakoid membrane. In terms of biological role, one of the components of the core complex of photosystem II (PSII). PSII is a light-driven water:plastoquinone oxidoreductase that uses light energy to abstract electrons from H(2)O, generating O(2) and a proton gradient subsequently used for ATP formation. It consists of a core antenna complex that captures photons, and an electron transfer chain that converts photonic excitation into a charge separation. The protein is Photosystem II reaction center protein K of Pelargonium hortorum (Common geranium).